The sequence spans 38 residues: Conotoxin FVIA (38 aa).

Positions 1 to 12 are excised as a propeptide; it reads ILSLSLLDRSTR. Disulfide bonds link Cys-13–Cys-28, Cys-20–Cys-32, and Cys-27–Cys-37. Position 37 is a cysteine amide (Cys-37).

The protein belongs to the conotoxin O1 superfamily. In terms of tissue distribution, expressed by the venom duct.

The protein resides in the secreted. Its function is as follows. Omega-conotoxins act at presynaptic membranes, they bind and block voltage-gated calcium channels (Cav). This peptide reversibly and selectively inhibits Cav2.2/CACNA1B (IC(50)=11.5 nM) voltage-gated calcium channels. Channel time recovery after toxin exposure is short (about 50 seconds). In vivo, it effectively and dose-dependently reduces nociceptive behavior in the formalin test and in neuropathic pain models, and reduces mechanical and thermal allodynia in the tail nerve injury rat model. It also shows significant analgesic effects on writhing in mouse neurotransmitter- and cytokine-induced pain models, though it has no effect on acute thermal pain and interferon-gamma-induced pain. It also depresses blood pressure immediately after administration, but pressure recovers relatively quickly and completely. This chain is Conotoxin FVIA, found in Conus fulmen (Thunderbolt cone).